We begin with the raw amino-acid sequence, 242 residues long: Protein HTATIP2 (242 aa).

Residue A2 is modified to N-acetylalanine. Residues 2 to 25 are required for interaction with elongation factor EEF1A1; sequence AETEALSKLREDFRMQNKSVFILG. NADPH-binding residues include S27, G28, E29, T30, R52, R53, L92, G93, Y143, K147, L170, and R178. The active-site Proton acceptor is the Y143. K147 is an active-site residue.

Monomer. Forms homodimers during oxidative stress. Interacts (via N-terminus) with elongation factor EEF1A1 (via middle-region); the interaction is direct and competes with EEF1A1 binding to guanyl-nucleotide exchange factor EEF1B2, thereby inhibiting GDP for GTP exchange and reactivation of EEF1A1. Interacts with nuclear transport receptors XPO4, IPO5/RANBP5, IPO7, IPO9 and KPNB1 as well as GCN1L1/GCN1 and LRPPRC probably through their HEAT repeats. Binds NCOA5/CIA.

It localises to the cytoplasm. Functionally, represses translation by preventing reactivation of elongation factor eEF1A. May also inhibit nuclear import by competing with nuclear import substrates for binding to a subset of nuclear transport receptors. Has additionally been proposed to act as a redox sensor involved in cellular oxidative stress surveillance. The chain is Protein HTATIP2 (HTATIP2) from Pongo pygmaeus (Bornean orangutan).